The primary structure comprises 190 residues: MKYKEPFGVKLDFETGIIENAKKSVRRLSDMKGYFIDEEAWKKMVEEGDPVVYEVYAIEQEEKEGDLNFATTVLYPGKVGNEFFMTKGHYHSKIDRAEVYFALKGKGGMLLQTPEGEARFIEMEPGTIVYVPPYWAHRTINTGDKPFIFLALYPADAGHDYGTIAEKGFSKIVVEENGKVVVKDNPKWRM.

Positions 89, 91, 98, and 137 each coordinate Fe cation.

Belongs to the archaeal-type GPI family. In terms of assembly, homodimer. It depends on Fe cation as a cofactor.

The protein localises to the cytoplasm. The enzyme catalyses alpha-D-glucose 6-phosphate = beta-D-fructose 6-phosphate. The protein operates within carbohydrate degradation; glycolysis; D-glyceraldehyde 3-phosphate and glycerone phosphate from D-glucose: step 2/4. With respect to regulation, inhibited by mannose 6-phosphate, fructose 1-phosphate and fructose 1,6-bisphosphate. Its activity is also inhibited by Cobalt (II) ions &lt; EDTA &lt; nickel (II) ions &lt; zinc (II) ions &lt;&lt; cadmium (II) ions &lt; copper (II) ions. Sodium and potassium ions and manganese ions show little or no effect on activity. The chain is Glucose-6-phosphate isomerase (pgiA) from Thermococcus litoralis.